Consider the following 147-residue polypeptide: Angiogenin (147 aa).

The first 24 residues, 1 to 24 (MVMGLGVLLLVFVLGLGLTPPTLA), serve as a signal peptide directing secretion. Pyrrolidone carboxylic acid is present on Gln-25. The active-site Proton acceptor is His-37. TRNA-binding residues include Arg-45 and Asp-46. 3 disulfides stabilise this stretch: Cys-50–Cys-105, Cys-63–Cys-116, and Cys-81–Cys-131. The Nucleolar localization signal motif lies at 55-59 (RRRGL). Positions 105 and 127 each coordinate tRNA. Residue His-138 is the Proton donor of the active site.

This sequence belongs to the pancreatic ribonuclease family. In terms of assembly, homodimer. Interacts with RNH1; inhibiting ANG ribonuclease activity. Interacts with PCNA.

The protein localises to the secreted. It localises to the nucleus. It is found in the nucleolus. The protein resides in the cytoplasm. Its subcellular location is the stress granule. With respect to regulation, has weak tRNA ribonuclease activity by itself due to partial autoinhibition by its C-terminus, which folds into a short alpha-helix that partially occludes the substrate-binding site. In absence of stress, the ribonuclease activity is inhibited by RNH1 in the cytoplasm. In response to stress, dissociates from RNH1 in the cytoplasm and associates with cytoplasmic ribosomes with vacant A-sites: ribosomes directly activate the tRNA ribonuclease activity of ANG by refolding the C-terminal alpha-helix. In response to stress, the angiogenic activity of ANG is inhibited by RNH1 in the nucleus. In terms of biological role, secreted ribonuclease that can either promote or restrict cell proliferation of target cells, depending on the context. Endocytosed in target cells via its receptor PLXNB2 and translocates to the cytoplasm or nucleus. Under stress conditions, localizes to the cytoplasm and promotes the assembly of stress granules (SGs): specifically cleaves a subset of tRNAs within anticodon loops to produce tRNA-derived stress-induced fragments (tiRNAs), resulting in translation repression and inhibition of cell proliferation. tiRNas also prevent formation of apoptosome, thereby promoting cell survival. Preferentially cleaves RNAs between a pyrimidine and an adenosine residue, suggesting that it cleaves the anticodon loop of tRNA(Ala) (32-UUAGCAU-38) after positions 33 and 36. Cleaves a subset of tRNAs, including tRNA(Ala), tRNA(Glu), tRNA(Gly), tRNA(Lys), tRNA(Val), tRNA(His), tRNA(Asp) and tRNA(Sec). Under growth conditions and in differentiated cells, translocates to the nucleus and stimulates ribosomal RNA (rRNA) transcription, including that containing the initiation site sequences of 45S rRNA, thereby promoting cell growth and proliferation. Angiogenin induces vascularization of normal and malignant tissues via its ability to promote rRNA transcription. Involved in hematopoietic stem and progenitor cell (HSPC) growth and survival by promoting rRNA transcription in growth conditions and inhibiting translation in response to stress, respectively. Mediates the crosstalk between myeloid and intestinal epithelial cells to protect the intestinal epithelial barrier integrity: secreted by myeloid cells and promotes intestinal epithelial cells proliferation and survival. Also mediates osteoclast-endothelial cell crosstalk in growing bone: produced by osteoclasts and protects the neighboring vascular cells against senescence by promoting rRNA transcription. The chain is Angiogenin (ANG) from Pan troglodytes (Chimpanzee).